The following is a 245-amino-acid chain: Probable 2-phosphosulfolactate phosphatase (245 aa).

Belongs to the ComB family. Requires Mg(2+) as cofactor.

It carries out the reaction (2R)-O-phospho-3-sulfolactate + H2O = (2R)-3-sulfolactate + phosphate. This is Probable 2-phosphosulfolactate phosphatase from Synechococcus sp. (strain RCC307).